Here is a 412-residue protein sequence, read N- to C-terminus: Argininosuccinate synthase (412 aa).

Residues 11 to 19 and A37 each bind ATP; that span reads AYSGGLDTS. Residues Y88 and S93 each coordinate L-citrulline. 116–124 contributes to the ATP binding site; sequence SHGATGKGN. The L-aspartate site is built by T120, N124, and D125. N124 provides a ligand contact to L-citrulline. Residues R128, S181, S190, E271, and Y283 each contribute to the L-citrulline site.

It belongs to the argininosuccinate synthase family. In terms of assembly, homotetramer.

It is found in the cytoplasm. It localises to the cytosol. It catalyses the reaction L-citrulline + L-aspartate + ATP = 2-(N(omega)-L-arginino)succinate + AMP + diphosphate + H(+). Its pathway is amino-acid biosynthesis; L-arginine biosynthesis; L-arginine from L-ornithine and carbamoyl phosphate: step 2/3. The protein operates within nitrogen metabolism; urea cycle; (N(omega)-L-arginino)succinate from L-aspartate and L-citrulline: step 1/1. In terms of biological role, one of the enzymes of the urea cycle, the metabolic pathway transforming neurotoxic amonia produced by protein catabolism into inocuous urea in the liver of ureotelic animals. Catalyzes the formation of arginosuccinate from aspartate, citrulline and ATP and together with ASL it is responsible for the biosynthesis of arginine in most body tissues. The protein is Argininosuccinate synthase of Xenopus tropicalis (Western clawed frog).